Reading from the N-terminus, the 461-residue chain is Photosystem II CP43 reaction center protein (461 aa).

Residues M1–E2 constitute a propeptide that is removed on maturation. T3 is modified (N-acetylthreonine). Residue T3 is modified to Phosphothreonine. The next 5 membrane-spanning stretches (helical) occupy residues L57–A81, L122–N143, K166–T188, K243–S263, and W279–A300. E355 contacts [CaMn4O5] cluster. The helical transmembrane segment at R435–P459 threads the bilayer.

It belongs to the PsbB/PsbC family. PsbC subfamily. PSII is composed of 1 copy each of membrane proteins PsbA, PsbB, PsbC, PsbD, PsbE, PsbF, PsbH, PsbI, PsbJ, PsbK, PsbL, PsbM, PsbT, PsbX, PsbY, PsbZ, Psb30/Ycf12, at least 3 peripheral proteins of the oxygen-evolving complex and a large number of cofactors. It forms dimeric complexes. Requires Binds multiple chlorophylls and provides some of the ligands for the Ca-4Mn-5O cluster of the oxygen-evolving complex. It may also provide a ligand for a Cl- that is required for oxygen evolution. PSII binds additional chlorophylls, carotenoids and specific lipids. as cofactor.

The protein localises to the plastid. It localises to the chloroplast thylakoid membrane. In terms of biological role, one of the components of the core complex of photosystem II (PSII). It binds chlorophyll and helps catalyze the primary light-induced photochemical processes of PSII. PSII is a light-driven water:plastoquinone oxidoreductase, using light energy to abstract electrons from H(2)O, generating O(2) and a proton gradient subsequently used for ATP formation. The sequence is that of Photosystem II CP43 reaction center protein from Gossypium barbadense (Sea Island cotton).